The primary structure comprises 446 residues: Hercynine oxygenase (446 aa).

Residue histidine 51 participates in Fe cation binding. Residue 87–90 participates in gamma-L-glutamyl-L-cysteine binding; sequence RASR. Fe cation contacts are provided by histidine 134 and histidine 138. Gamma-L-glutamyl-L-cysteine is bound by residues aspartate 416 and arginine 420.

The protein belongs to the EgtB family. As to quaternary structure, monomer. Requires Fe(2+) as cofactor.

It catalyses the reaction gamma-L-glutamyl-L-cysteine + hercynine + O2 = gamma-L-glutamyl-hercynylcysteine S-oxide + H2O. Its pathway is amino-acid biosynthesis; ergothioneine biosynthesis. Catalyzes the oxidative sulfurization of hercynine (N-alpha,N-alpha,N-alpha-trimethyl-L-histidine) into hercynyl-gamma-L-glutamyl-L-cysteine sulfoxide, a step in the biosynthesis pathway of ergothioneine. This chain is Hercynine oxygenase, found in Mycolicibacterium thermoresistibile (strain ATCC 19527 / DSM 44167 / CIP 105390 / JCM 6362 / NCTC 10409 / 316) (Mycobacterium thermoresistibile).